Here is a 482-residue protein sequence, read N- to C-terminus: tRNA sulfurtransferase (482 aa).

Residues 61–165 (AAIVAELTRI…DERLILVTAR (105 aa)) enclose the THUMP domain. ATP contacts are provided by residues 183 to 184 (LI), K265, G287, and Q296. A disulfide bridge connects residues C344 and C456. Residues 404–482 (FSHNDVILDI…GFKNVKVYRP (79 aa)) form the Rhodanese domain. Catalysis depends on C456, which acts as the Cysteine persulfide intermediate.

It belongs to the ThiI family.

Its subcellular location is the cytoplasm. The enzyme catalyses [ThiI sulfur-carrier protein]-S-sulfanyl-L-cysteine + a uridine in tRNA + 2 reduced [2Fe-2S]-[ferredoxin] + ATP + H(+) = [ThiI sulfur-carrier protein]-L-cysteine + a 4-thiouridine in tRNA + 2 oxidized [2Fe-2S]-[ferredoxin] + AMP + diphosphate. It carries out the reaction [ThiS sulfur-carrier protein]-C-terminal Gly-Gly-AMP + S-sulfanyl-L-cysteinyl-[cysteine desulfurase] + AH2 = [ThiS sulfur-carrier protein]-C-terminal-Gly-aminoethanethioate + L-cysteinyl-[cysteine desulfurase] + A + AMP + 2 H(+). Its pathway is cofactor biosynthesis; thiamine diphosphate biosynthesis. In terms of biological role, catalyzes the ATP-dependent transfer of a sulfur to tRNA to produce 4-thiouridine in position 8 of tRNAs, which functions as a near-UV photosensor. Also catalyzes the transfer of sulfur to the sulfur carrier protein ThiS, forming ThiS-thiocarboxylate. This is a step in the synthesis of thiazole, in the thiamine biosynthesis pathway. The sulfur is donated as persulfide by IscS. This is tRNA sulfurtransferase from Erwinia tasmaniensis (strain DSM 17950 / CFBP 7177 / CIP 109463 / NCPPB 4357 / Et1/99).